Reading from the N-terminus, the 322-residue chain is MKIGNYQLKNNLIVAPMAGVTDRPFRELCLRYGAGMAVSEMMSANPKLWKTSKSKQRMVHEGESGIRSVQIAGSDPQLMADAAQFSVENGAQIIDINMGCPAKKVNKKLAGSALLQYPTIIEEILKAVVNAVDVPVTLKTRTGWDTDNKNCVQIAKLAEDCGIQALALHGRTKACMYKGEAEYDSIKAVKEAISIPVIANGDIDSPEKAKFVLEYTGADALMIGRPAQGRPWIFQEIHHYLENGTTMDELPTQEVKAIMLGHVNALHEFYGEYLGPRIARKHVGWYLKEHEQASEFRRTFNAIDAAPLQIEALEGYFDNVAS.

FMN is bound by residues 16–18 (PMA) and glutamine 70. Cysteine 100 acts as the Proton donor in catalysis. FMN-binding positions include lysine 139, 200–202 (NGD), and 224–225 (GR).

This sequence belongs to the Dus family. DusB subfamily. Requires FMN as cofactor.

The catalysed reaction is a 5,6-dihydrouridine in tRNA + NAD(+) = a uridine in tRNA + NADH + H(+). The enzyme catalyses a 5,6-dihydrouridine in tRNA + NADP(+) = a uridine in tRNA + NADPH + H(+). Its function is as follows. Catalyzes the synthesis of 5,6-dihydrouridine (D), a modified base found in the D-loop of most tRNAs, via the reduction of the C5-C6 double bond in target uridines. The polypeptide is tRNA-dihydrouridine synthase B (Vibrio parahaemolyticus serotype O3:K6 (strain RIMD 2210633)).